A 169-amino-acid chain; its full sequence is S-ribosylhomocysteine lyase (169 aa).

Fe cation is bound by residues histidine 54, histidine 58, and cysteine 128.

Belongs to the LuxS family. As to quaternary structure, homodimer. Requires Fe cation as cofactor.

It carries out the reaction S-(5-deoxy-D-ribos-5-yl)-L-homocysteine = (S)-4,5-dihydroxypentane-2,3-dione + L-homocysteine. Its function is as follows. Involved in the synthesis of autoinducer 2 (AI-2) which is secreted by bacteria and is used to communicate both the cell density and the metabolic potential of the environment. The regulation of gene expression in response to changes in cell density is called quorum sensing. Catalyzes the transformation of S-ribosylhomocysteine (RHC) to homocysteine (HC) and 4,5-dihydroxy-2,3-pentadione (DPD). The protein is S-ribosylhomocysteine lyase of Shewanella baltica (strain OS223).